Reading from the N-terminus, the 657-residue chain is Glycogen debranching enzyme (657 aa).

The active-site Nucleophile is the Asp336. Catalysis depends on Glu371, which acts as the Proton donor. The disordered stretch occupies residues 460-479 (ANGEENRDGTNNNYSNNHGK).

This sequence belongs to the glycosyl hydrolase 13 family.

The enzyme catalyses Hydrolysis of (1-&gt;6)-alpha-D-glucosidic linkages to branches with degrees of polymerization of three or four glucose residues in limit dextrin.. The protein operates within glycan degradation; glycogen degradation. Functionally, removes maltotriose and maltotetraose chains that are attached by 1,6-alpha-linkage to the limit dextrin main chain, generating a debranched limit dextrin. The chain is Glycogen debranching enzyme from Shigella dysenteriae serotype 1 (strain Sd197).